The sequence spans 495 residues: DDB1- and CUL4-associated factor 4 (495 aa).

Basic residues predominate over residues 1–17; it reads MNKSRWQSRRRHGRRSH. Residues 1-66 form a disordered region; that stretch reads MNKSRWQSRR…TAGTSSVPEL (66 aa). Residues 24 to 34 show a composition bias toward basic and acidic residues; the sequence is RLRDSEDRSDS. The segment covering 51–62 has biased composition (low complexity); that stretch reads PSTSSGTAGTSS. 2 WD repeats span residues 368 to 407 and 410 to 451; these read FHDS…CVRQ and GHVN…LLRT.

In terms of assembly, interacts with DDB1 and CUL4A.

Its pathway is protein modification; protein ubiquitination. Its function is as follows. May function as a substrate receptor for CUL4-DDB1 E3 ubiquitin-protein ligase complex. The chain is DDB1- and CUL4-associated factor 4 (DCAF4) from Homo sapiens (Human).